A 338-amino-acid chain; its full sequence is Nuclear hormone receptor family member nhr-108 (338 aa).

A DNA-binding region (nuclear receptor) is located at residues 7–82 (NQPCMVCGEI…IGMLEKVVAS (76 aa)). The segment at 10-30 (CMVCGEISYSIRFGAVSCRAC) adopts an NR C4-type zinc-finger fold. The NR C4-type; degenerate zinc finger occupies 46–65 (KRCNGACDLGKYHRKTCQSC). The 247-residue stretch at 92–338 (NNQTILSGLE…QCPLYEATNE (247 aa)) folds into the NR LBD domain.

It belongs to the nuclear hormone receptor family.

Its subcellular location is the nucleus. Its function is as follows. Orphan nuclear receptor. The chain is Nuclear hormone receptor family member nhr-108 (nhr-108) from Caenorhabditis elegans.